The following is a 769-amino-acid chain: Intron Large complex component GCFC2 (769 aa).

Disordered stretches follow at residues 1–122 (MALR…PIVE) and 134–212 (RKRE…DENQ). A phosphoserine mark is found at Ser-16, Ser-17, Ser-19, and Ser-85. Thr-86 is subject to Phosphothreonine. Ser-118 and Ser-169 each carry phosphoserine. Basic and acidic residues predominate over residues 190 to 201 (RMAEETSIRSEE). The segment covering 202 to 212 (SSEESQEDENQ) has biased composition (acidic residues). A phosphoserine mark is found at Ser-203 and Ser-206. A coiled-coil region spans residues 256–308 (NLEIIKKQLNNRLTLLQESHRSHQREYEKYEQDIKSSKTAIQNLESASDHAQN).

Belongs to the GCF family. As to quaternary structure, found in the Intron Large (IL) complex, a post-mRNA release spliceosomal complex containing the excised intron, U2, U5 and U6 snRNPs, and splicing factors. Interacts with TFIP11 and DHX15.

It is found in the nucleus. It localises to the nucleoplasm. The protein localises to the nucleolus. Its function is as follows. Involved in pre-mRNA splicing through regulating spliceosome C complex formation. May play a role during late-stage splicing events and turnover of excised introns. This chain is Intron Large complex component GCFC2 (Gcfc2), found in Mus musculus (Mouse).